Here is a 358-residue protein sequence, read N- to C-terminus: 4-hydroxy-3-methylbut-2-en-1-yl diphosphate synthase (flavodoxin) (358 aa).

Residues Cys-264, Cys-267, Cys-299, and Glu-306 each coordinate [4Fe-4S] cluster.

This sequence belongs to the IspG family. The cofactor is [4Fe-4S] cluster.

It catalyses the reaction (2E)-4-hydroxy-3-methylbut-2-enyl diphosphate + oxidized [flavodoxin] + H2O + 2 H(+) = 2-C-methyl-D-erythritol 2,4-cyclic diphosphate + reduced [flavodoxin]. Its pathway is isoprenoid biosynthesis; isopentenyl diphosphate biosynthesis via DXP pathway; isopentenyl diphosphate from 1-deoxy-D-xylulose 5-phosphate: step 5/6. Converts 2C-methyl-D-erythritol 2,4-cyclodiphosphate (ME-2,4cPP) into 1-hydroxy-2-methyl-2-(E)-butenyl 4-diphosphate. In Helicobacter acinonychis (strain Sheeba), this protein is 4-hydroxy-3-methylbut-2-en-1-yl diphosphate synthase (flavodoxin).